Consider the following 320-residue polypeptide: MQTRKTFSWIKEQIARSISVSLLIYIITRTSISSAYPIFAQQGYENPREATGRIVCANCHLANKPVDVEVPQAVLPDTVFEAVVRIPYDKQLKQVLANGKKGGLNVGAVLILPEGFELAPTDRISPEMKEKIGNLSFQSYRPNKKNILVIGPVPGQKYSEIIFPILSPDPATNKDVHFLKYPIYVGGNRGRGQIYPDGSKSNNTVYNATAAGIVSKIIRKERGGYEISITDPSDGRQVVDIIPPGPELLVSEGESIQFDQPLTSNPNVGGFGQGDAEIVLQDPLRVQGLLFFLASVILAQIFLVLKKKQFEKVQLAEMNF.

The N-terminal stretch at 1-35 is a signal peptide; it reads MQTRKTFSWIKEQIARSISVSLLIYIITRTSISSA. Residues tyrosine 36, cysteine 56, cysteine 59, and histidine 60 each coordinate heme. Residues 286–306 traverse the membrane as a helical segment; it reads VQGLLFFLASVILAQIFLVLK.

This sequence belongs to the cytochrome f family. As to quaternary structure, the 4 large subunits of the cytochrome b6-f complex are cytochrome b6, subunit IV (17 kDa polypeptide, petD), cytochrome f and the Rieske protein, while the 4 small subunits are PetG, PetL, PetM and PetN. The complex functions as a dimer. Heme is required as a cofactor.

Its subcellular location is the plastid. It is found in the chloroplast thylakoid membrane. In terms of biological role, component of the cytochrome b6-f complex, which mediates electron transfer between photosystem II (PSII) and photosystem I (PSI), cyclic electron flow around PSI, and state transitions. The polypeptide is Cytochrome f (Jasminum nudiflorum (Winter jasmine)).